Reading from the N-terminus, the 516-residue chain is 1-pyrroline-5-carboxylate dehydrogenase (516 aa).

Active-site residues include Glu-287 and Cys-321.

The protein belongs to the aldehyde dehydrogenase family. RocA subfamily.

It catalyses the reaction L-glutamate 5-semialdehyde + NAD(+) + H2O = L-glutamate + NADH + 2 H(+). It functions in the pathway amino-acid degradation; L-proline degradation into L-glutamate; L-glutamate from L-proline: step 2/2. This chain is 1-pyrroline-5-carboxylate dehydrogenase, found in Bacillus licheniformis (strain ATCC 14580 / DSM 13 / JCM 2505 / CCUG 7422 / NBRC 12200 / NCIMB 9375 / NCTC 10341 / NRRL NRS-1264 / Gibson 46).